The sequence spans 69 residues: Toxin Lc a (69 aa).

Disulfide bonds link Cys-3/Cys-20, Cys-13/Cys-41, Cys-45/Cys-56, and Cys-57/Cys-62.

This sequence belongs to the three-finger toxin family. Long-chain subfamily. Type II alpha-neurotoxin sub-subfamily. In terms of tissue distribution, expressed by the venom gland.

Its subcellular location is the secreted. Functionally, binds with high affinity to muscular nicotinic acetylcholine receptors (nAChRs), whereas it binds with a low affinity to neuronal alpha-7/CHRNA7 nAChRs. This is Toxin Lc a from Laticauda colubrina (Yellow-lipped sea krait).